Reading from the N-terminus, the 232-residue chain is Ubiquinone biosynthesis O-methyltransferase (232 aa).

S-adenosyl-L-methionine contacts are provided by R36, G55, D76, and M120.

Belongs to the methyltransferase superfamily. UbiG/COQ3 family.

It catalyses the reaction a 3-demethylubiquinol + S-adenosyl-L-methionine = a ubiquinol + S-adenosyl-L-homocysteine + H(+). It carries out the reaction a 3-(all-trans-polyprenyl)benzene-1,2-diol + S-adenosyl-L-methionine = a 2-methoxy-6-(all-trans-polyprenyl)phenol + S-adenosyl-L-homocysteine + H(+). Its pathway is cofactor biosynthesis; ubiquinone biosynthesis. O-methyltransferase that catalyzes the 2 O-methylation steps in the ubiquinone biosynthetic pathway. The protein is Ubiquinone biosynthesis O-methyltransferase of Burkholderia vietnamiensis (strain G4 / LMG 22486) (Burkholderia cepacia (strain R1808)).